The following is a 159-amino-acid chain: Ribosome maturation factor RimP (159 aa).

This sequence belongs to the RimP family.

It localises to the cytoplasm. Functionally, required for maturation of 30S ribosomal subunits. This Geotalea uraniireducens (strain Rf4) (Geobacter uraniireducens) protein is Ribosome maturation factor RimP.